A 31-amino-acid chain; its full sequence is Cytochrome b6-f complex subunit 6 (31 aa).

Residues 4-26 (LTSYFGFLLAASTITPALFIGLN) traverse the membrane as a helical segment.

Belongs to the PetL family. In terms of assembly, the 4 large subunits of the cytochrome b6-f complex are cytochrome b6, subunit IV (17 kDa polypeptide, PetD), cytochrome f and the Rieske protein, while the 4 small subunits are PetG, PetL, PetM and PetN. The complex functions as a dimer.

The protein localises to the plastid. The protein resides in the chloroplast thylakoid membrane. Component of the cytochrome b6-f complex, which mediates electron transfer between photosystem II (PSII) and photosystem I (PSI), cyclic electron flow around PSI, and state transitions. PetL is important for photoautotrophic growth as well as for electron transfer efficiency and stability of the cytochrome b6-f complex. The chain is Cytochrome b6-f complex subunit 6 from Phalaenopsis aphrodite subsp. formosana (Moth orchid).